Consider the following 1022-residue polypeptide: Probable E3 ubiquitin-protein ligase HERC6 (1022 aa).

5 RCC1 repeats span residues 41–92, 93–145, 147–198, 200–253, and 254–304; these read NHRV…AVCH, KGRV…ALSK, SQVF…ALSL, GTSF…VLTQ, and DGKV…AYVH. The 325-residue stretch at 693 to 1017 folds into the HECT domain; it reads EATDFCKVLV…INNNRGFVSP (325 aa). C985 serves as the catalytic Glycyl thioester intermediate.

As to expression, detected in brain, heart, placenta and testis.

The protein resides in the cytoplasm. It localises to the cytosol. The enzyme catalyses S-ubiquitinyl-[E2 ubiquitin-conjugating enzyme]-L-cysteine + [acceptor protein]-L-lysine = [E2 ubiquitin-conjugating enzyme]-L-cysteine + N(6)-ubiquitinyl-[acceptor protein]-L-lysine.. It participates in protein modification; protein ubiquitination. In terms of biological role, E3 ubiquitin-protein ligase which accepts ubiquitin from an E2 ubiquitin-conjugating enzyme in the form of a thioester and then directly transfers the ubiquitin to targeted substrates. This chain is Probable E3 ubiquitin-protein ligase HERC6 (HERC6), found in Homo sapiens (Human).